Reading from the N-terminus, the 1052-residue chain is Mitotic checkpoint serine/threonine-protein kinase BUB1 beta (1052 aa).

A BUB1 N-terminal domain is found at 56-219 (FESEIRFYSG…LEPSEPQRSS (164 aa)). The Nuclear localization signal signature appears at 105–112 (GETRYYND). Positions 146 to 179 (AQFYISWAEEYEARENFKKADIIFQEGIERKAEP) are necessary for interaction with KNL1. Disordered regions lie at residues 206–256 (EEEA…NAVP) and 272–327 (ADTA…TSIP). Residues 217-225 (RSSLAELKS) carry the D-box motif. N6-acetyllysine; by PCAF is present on Lys243. Ser360 is modified (phosphoserine). Residues 361–381 (TRKPGREEGDPLQRVQSHQQG) form a disordered region. Ser428 bears the Phosphoserine mark. The segment at 496-552 (SNPREISPAENILQEQPDSKGSSMPFSIFDESLSDKKDKSPATGGPQVLNAQRRPLS) is disordered. Polar residues predominate over residues 508-520 (LQEQPDSKGSSMP). A phosphoserine mark is found at Ser535 and Ser659. The residue at position 665 (Ser665) is a Phosphoserine; by PLK1. Ser686 is modified (phosphoserine). The Protein kinase domain maps to 756-1040 (VIKQEHLTCD…TISPEALLTQ (285 aa)). 762–770 (LTCDDYRLF) serves as a coordination point for ATP. Thr781 carries the post-translational modification Phosphothreonine; by PLK1. Lys784 is an ATP binding site. Asp871 functions as the Proton acceptor in the catalytic mechanism. The residue at position 998 (Thr998) is a Phosphothreonine; by PLK1. Residues Ser1033 and Ser1050 each carry the phosphoserine modification.

This sequence belongs to the protein kinase superfamily. Ser/Thr protein kinase family. BUB1 subfamily. In terms of assembly, interacts with CENPE. Interacts with PLK1. Part of a complex containing BUB3, CDC20 and BUB1B. Interacts with anaphase-promoting complex/cyclosome (APC/C). Interacts with KNL1. Interacts with KAT2B. Interacts with RIPK3. Interacts with the closed conformation form of MAD2L1. Interacts with CDC20. In terms of processing, proteolytically cleaved by caspase-3 in a cell cycle specific manner. The cleavage might be involved in the durability of the cell cycle delay. Acetylation at Lys-243 regulates its degradation and timing in anaphase entry. Post-translationally, ubiquitinated. Degraded by the proteasome. Ubiquitinated by UBR5, promoting disassembly of the mitotic checkpoint complex from the APC/C complex. In terms of processing, sumoylated with SUMO2 and SUMO3. The sumoylation mediates the association with CENPE at the kinetochore. Autophosphorylated in vitro. Intramolecular autophosphorylation stimulated by CENPE. Phosphorylated during mitosis and hyperphosphorylated in mitotically arrested cells. Phosphorylation at Ser-659 and Ser-1033 occurs at kinetochores upon mitotic entry with dephosphorylation at the onset of anaphase. Post-translationally, proteolytically cleaved by caspase-3 in a cell cycle specific manner. The cleavage might be involved in the durability of the cell cycle delay. Caspase-3 cleavage is associated with abrogation of the mitotic checkpoint. The major site of cleavage is at Asp-603. As to expression, highly expressed in thymus followed by spleen.

The protein resides in the cytoplasm. The protein localises to the nucleus. It localises to the chromosome. Its subcellular location is the centromere. It is found in the kinetochore. The enzyme catalyses L-seryl-[protein] + ATP = O-phospho-L-seryl-[protein] + ADP + H(+). The catalysed reaction is L-threonyl-[protein] + ATP = O-phospho-L-threonyl-[protein] + ADP + H(+). With respect to regulation, kinase activity stimulated by CENPE. Essential component of the mitotic checkpoint. Required for normal mitosis progression and tumor suppression. The mitotic checkpoint delays anaphase until all chromosomes are properly attached to the mitotic spindle. One of its checkpoint functions is to inhibit the activity of the anaphase-promoting complex/cyclosome (APC/C) by blocking the binding of CDC20 to APC/C, independently of its kinase activity. The other is to monitor kinetochore activities that depend on the kinetochore motor CENPE. Required for kinetochore localization of CENPE. Negatively regulates PLK1 activity in interphase cells and suppresses centrosome amplification. Also implicated in triggering apoptosis in polyploid cells that exit aberrantly from mitotic arrest. Essential for tumor suppression. May play a role in regulating aging and fertility. This is Mitotic checkpoint serine/threonine-protein kinase BUB1 beta (Bub1b) from Mus musculus (Mouse).